Reading from the N-terminus, the 362-residue chain is Isopentenyl-diphosphate delta-isomerase (362 aa).

6–7 (RK) contacts substrate. FMN-binding positions include 65 to 67 (SIT), serine 95, and asparagine 124. Residue 95 to 97 (SQR) coordinates substrate. Glutamine 158 contributes to the substrate binding site. Residue glutamate 159 participates in Mg(2+) binding. FMN contacts are provided by residues lysine 189, threonine 219, 269 to 271 (GVR), and 290 to 291 (AL).

The protein belongs to the IPP isomerase type 2 family. As to quaternary structure, homooctamer. Dimer of tetramers. Requires FMN as cofactor. It depends on NADPH as a cofactor. The cofactor is Mg(2+).

It localises to the cytoplasm. The enzyme catalyses isopentenyl diphosphate = dimethylallyl diphosphate. In terms of biological role, involved in the biosynthesis of isoprenoids. Catalyzes the 1,3-allylic rearrangement of the homoallylic substrate isopentenyl (IPP) to its allylic isomer, dimethylallyl diphosphate (DMAPP). This Methanococcoides burtonii (strain DSM 6242 / NBRC 107633 / OCM 468 / ACE-M) protein is Isopentenyl-diphosphate delta-isomerase.